The chain runs to 457 residues: Protein unc-93 homolog A (457 aa).

5 consecutive transmembrane segments (helical) span residues 8 to 28 (VLVV…LQSL), 42 to 62 (ALST…PLLI), 65 to 85 (LGCK…SVGN), 86 to 106 (FFAS…GAAP), and 140 to 160 (IFFL…SLVF). The N-linked (GlcNAc...) asparagine glycan is linked to Asn190. 6 helical membrane passes run 202 to 222 (TLLG…AAFL), 257 to 277 (LCLL…LSSE), 291 to 311 (FVGY…VLYG), 320 to 340 (AVLY…LLLW), 344 to 364 (ADHL…DAVW), and 395 to 415 (FVIA…YILL).

Belongs to the unc-93 family. Expressed in testis, small intestine, spleen, prostate and ovary.

It localises to the cell membrane. In Homo sapiens (Human), this protein is Protein unc-93 homolog A (UNC93A).